We begin with the raw amino-acid sequence, 396 residues long: Phosphoglycerate kinase (396 aa).

Substrate is bound by residues 21–23, R37, 60–63, R121, and R154; these read DFN and HLGR. ATP-binding positions include K205, G296, E327, and 353 to 356; that span reads GGDS.

This sequence belongs to the phosphoglycerate kinase family. As to quaternary structure, monomer.

The protein resides in the cytoplasm. It carries out the reaction (2R)-3-phosphoglycerate + ATP = (2R)-3-phospho-glyceroyl phosphate + ADP. It functions in the pathway carbohydrate degradation; glycolysis; pyruvate from D-glyceraldehyde 3-phosphate: step 2/5. In Anaeromyxobacter sp. (strain Fw109-5), this protein is Phosphoglycerate kinase.